The chain runs to 489 residues: Putative general negative regulator of transcription C16C9.04c (489 aa).

The segment at cysteine 18 to arginine 61 adopts an RING-type zinc-finger fold. Residues alanine 76–asparagine 109 are a coiled coil. The region spanning asparagine 116–serine 198 is the RRM domain. The C3H1-type zinc finger occupies tyrosine 199–glycine 226. Polar residues-rich tracts occupy residues leucine 246–serine 261 and glutamate 466–asparagine 479. Disordered stretches follow at residues leucine 246–threonine 268 and valine 458–serine 489.

Its subcellular location is the nucleus. Its function is as follows. May negatively regulate the basal and activated transcription of many genes. This Schizosaccharomyces pombe (strain 972 / ATCC 24843) (Fission yeast) protein is Putative general negative regulator of transcription C16C9.04c.